Here is a 214-residue protein sequence, read N- to C-terminus: Guanylate kinase (214 aa).

A Guanylate kinase-like domain is found at 6–192; sequence GTLYIISAPS…ALEDLKAIFR (187 aa). ATP is bound at residue 13 to 20; sequence APSGAGKT.

This sequence belongs to the guanylate kinase family.

Its subcellular location is the cytoplasm. It carries out the reaction GMP + ATP = GDP + ADP. Functionally, essential for recycling GMP and indirectly, cGMP. The sequence is that of Guanylate kinase from Pseudomonas syringae pv. syringae (strain B728a).